We begin with the raw amino-acid sequence, 117 residues long: Hainantoxin-XV-3 (117 aa).

Positions Met-1–Ser-20 are cleaved as a signal peptide. The tract at residues Ser-20 to Glu-55 is disordered. Positions Ser-21–Arg-56 are excised as a propeptide. The segment covering Asn-23 to Glu-55 has biased composition (basic and acidic residues). 4 disulfide bridges follow: Cys-58–Cys-72, Cys-65–Cys-78, Cys-69–Cys-115, and Cys-71–Cys-91.

The protein belongs to the neurotoxin 03 (Tx2) family. 02 subfamily. HNTX-XV sub-subfamily. Expressed by the venom gland.

It is found in the secreted. Its function is as follows. Putative ion channel inhibitor. In Cyriopagopus hainanus (Chinese bird spider), this protein is Hainantoxin-XV-3.